Consider the following 377-residue polypeptide: RING finger protein 215 (377 aa).

Residues 1-22 (MGPAARPALRSPPPPPPPPPSP) are Cytoplasmic-facing. The interval 1–22 (MGPAARPALRSPPPPPPPPPSP) is disordered. Pro residues predominate over residues 10–22 (RSPPPPPPPPPSP). Residues 23 to 43 (LLLLLPLLPLWLGLAGPGAAA) form a helical membrane-spanning segment. Topologically, residues 44–250 (DGSEPAAGAG…GGSRAQEQKP (207 aa)) are extracellular. Asn-186 carries N-linked (GlcNAc...) asparagine glycosylation. The helical transmembrane segment at 251–271 (LQQLWNAILLVAMLLCTGLVV) threads the bilayer. Topologically, residues 272 to 377 (QAQRQASRQS…NVLGNRYSDD (106 aa)) are cytoplasmic. An RING-type; atypical zinc finger spans residues 325-366 (CAVCLDYFCNKQWLRVLPCKHEFHRDCVDPWLMLQQTCPLCK).

It is found in the membrane. The polypeptide is RING finger protein 215 (RNF215) (Homo sapiens (Human)).